Here is a 183-residue protein sequence, read N- to C-terminus: Bifunctional protein PyrR (183 aa).

Substrate is bound by residues 46-47 (TR), Arg87, 107-115 (DDVIFSGRT), Arg140, and Val164. A PRPP-binding motif is present at residues 103 to 115 (VVLVDDVIFSGRT).

It belongs to the purine/pyrimidine phosphoribosyltransferase family. PyrR subfamily.

It carries out the reaction UMP + diphosphate = 5-phospho-alpha-D-ribose 1-diphosphate + uracil. Regulates the transcription of the pyrimidine nucleotide (pyr) operon in response to exogenous pyrimidines. Functionally, also displays a weak uracil phosphoribosyltransferase activity which is not physiologically significant. This Thermosynechococcus vestitus (strain NIES-2133 / IAM M-273 / BP-1) protein is Bifunctional protein PyrR.